Reading from the N-terminus, the 606-residue chain is WD repeat-containing protein 1 (606 aa).

13 WD repeats span residues 4-45, 48-87, 93-135, 138-176, 180-218, 224-263, 270-306, 311-351, 358-408, 432-474, 480-518, 523-561, and 566-604; these read EIKK…LRNI, PAVADIYTEHAHQVVVAKYAPSGFYIASGDISGKLRIWDT, ILKY…LWDT, SVGEITGHNKVINSVDIKQNRPYRLATGSDDNCAAFFEG, KFKFTIGDHSRFVNCVRFSPDGNRFATASADGQIFIYDG, VCALGGSKAHDGGIYAISWSPDSTHLLSASGDKTSKIWDV, STFPMGSNVLDQQLGCLWQKDHLLSISLSGYINYLDK, KPLR…YWDS, SFSG…KLDV, LKDQ…VYSI, KDEGKLLEAKGPVTDLAYSHDGAFLAVCDASKVVTVFSV, SENNVFYGHHAKIVCLAWSPDNEHFASGGMDMMVYVWTL, and TKVKIQDAHRLHHVSSLAWLDEHTLVTTSHDASVKEWTI. N6-acetyllysine is present on residues Lys28, Lys81, Lys95, and Lys115. Tyr238 carries the phosphotyrosine modification. At Lys480 the chain carries N6-acetyllysine.

This sequence belongs to the WD repeat AIP1 family.

Its subcellular location is the cytoplasm. It is found in the cytoskeleton. The protein localises to the cell projection. The protein resides in the podosome. Functionally, induces disassembly of actin filaments in conjunction with ADF/cofilin family proteins. Enhances cofilin-mediated actin severing. Involved in cytokinesis. Involved in chemotactic cell migration by restricting lamellipodial membrane protrusions. Involved in myocardium sarcomere organization. Required for cardiomyocyte growth and maintenance. Involved in megakaryocyte maturation and platelet shedding. Required for the establishment of planar cell polarity (PCP) during follicular epithelium development and for cell shape changes during PCP; the function seems to implicate cooperation with CFL1 and/or DSTN/ADF. Involved in the generation/maintenance of cortical tension. Involved in assembly and maintenance of epithelial apical cell junctions and plays a role in the organization of the perijunctional actomyosin belt. The chain is WD repeat-containing protein 1 (Wdr1) from Rattus norvegicus (Rat).